Consider the following 101-residue polypeptide: Small ribosomal subunit protein uS14 (101 aa).

This sequence belongs to the universal ribosomal protein uS14 family. Part of the 30S ribosomal subunit. Contacts proteins S3 and S10.

Its function is as follows. Binds 16S rRNA, required for the assembly of 30S particles and may also be responsible for determining the conformation of the 16S rRNA at the A site. The polypeptide is Small ribosomal subunit protein uS14 (Sphingopyxis alaskensis (strain DSM 13593 / LMG 18877 / RB2256) (Sphingomonas alaskensis)).